The chain runs to 109 residues: Large ribosomal subunit protein uL22 (109 aa).

The protein belongs to the universal ribosomal protein uL22 family. Part of the 50S ribosomal subunit.

Its function is as follows. This protein binds specifically to 23S rRNA; its binding is stimulated by other ribosomal proteins, e.g. L4, L17, and L20. It is important during the early stages of 50S assembly. It makes multiple contacts with different domains of the 23S rRNA in the assembled 50S subunit and ribosome. Functionally, the globular domain of the protein is located near the polypeptide exit tunnel on the outside of the subunit, while an extended beta-hairpin is found that lines the wall of the exit tunnel in the center of the 70S ribosome. This Cupriavidus metallidurans (strain ATCC 43123 / DSM 2839 / NBRC 102507 / CH34) (Ralstonia metallidurans) protein is Large ribosomal subunit protein uL22.